A 276-amino-acid chain; its full sequence is Phosphate import ATP-binding protein PstB 2 (276 aa).

Residues M22 to V262 enclose the ABC transporter domain. Residue G54–T61 coordinates ATP.

Belongs to the ABC transporter superfamily. Phosphate importer (TC 3.A.1.7) family. In terms of assembly, the complex is composed of two ATP-binding proteins (PstB), two transmembrane proteins (PstC and PstA) and a solute-binding protein (PstS).

It localises to the cell membrane. It catalyses the reaction phosphate(out) + ATP + H2O = ADP + 2 phosphate(in) + H(+). In terms of biological role, part of the ABC transporter complex PstSACB involved in phosphate import. Responsible for energy coupling to the transport system. The protein is Phosphate import ATP-binding protein PstB 2 of Mycobacterium bovis (strain ATCC BAA-935 / AF2122/97).